The sequence spans 823 residues: Polyadenylation and cleavage factor homolog 11 (823 aa).

One can recognise a CID domain in the interval S3–D135. 5 disordered regions span residues N142–T176, S188–K301, S340–P395, L570–S643, and W728–S755. Polar residues-rich tracts occupy residues A157 to T176 and S188 to K198. Residues V200 to D226 show a composition bias toward basic and acidic residues. 2 stretches are compositionally biased toward low complexity: residues K227–A242 and A342–P353. A compositionally biased stretch (pro residues) spans P374–Q390. A compositionally biased stretch (low complexity) spans P571–R581. Positions Q609 to N624 are enriched in polar residues.

The sequence is that of Polyadenylation and cleavage factor homolog 11 (pcf-11) from Caenorhabditis elegans.